The sequence spans 229 residues: Large ribosomal subunit protein uL1 (229 aa).

It belongs to the universal ribosomal protein uL1 family. Part of the 50S ribosomal subunit.

Its function is as follows. Binds directly to 23S rRNA. The L1 stalk is quite mobile in the ribosome, and is involved in E site tRNA release. In terms of biological role, protein L1 is also a translational repressor protein, it controls the translation of the L11 operon by binding to its mRNA. The protein is Large ribosomal subunit protein uL1 of Streptococcus pneumoniae serotype 2 (strain D39 / NCTC 7466).